A 140-amino-acid polypeptide reads, in one-letter code: Odorant-binding protein 10 (140 aa).

The signal sequence occupies residues 1–25; sequence MTSFRLANLTVFLVLLFCFMRGVHS.

It belongs to the PBP/GOBP family. As to expression, high-level expression in female mouth parts, particularly in the proboscis (at protein level). Low-level expression in female antenna (at protein level). Female salivary gland. Female chemosensory organs: antenna, palp and proboscis. Male antenna, wing and maxillary palp. Expressed at higher levels in male tissues compared to female tissues. Not detected in midgut.

It localises to the secreted. Functionally, involved in modulation of blood-feeding behavior and capacity in female mosquitoes. Required for normal oviposition. Required for normal fecundity and fertility of female mosquitoes. Required for normal expression of VGA1 gene, which encodes the egg yolk protein vitellogenin-A1. Required for normal female longevity when mosquitoes are maintained on regular sugar meal. Its function is as follows. (Microbial infection) Facilitates shedding of dengue virus type 2 particles into mosquito saliva. Does not affect dengue virus type 2 replication or infection prevalence in midgut and salivary glands at 14 days after blood feeding. (Microbial infection) Facilitates shedding of Zika virus particles into mosquito saliva. Does not affect Zika virus replication or infection prevalence in midgut and salivary glands at 14 days after blood feeding. The protein is Odorant-binding protein 10 of Aedes aegypti (Yellowfever mosquito).